The following is a 526-amino-acid chain: tRNA-2-methylthio-N(6)-dimethylallyladenosine synthase (526 aa).

The region spanning 14–130 (RTYQVRTYGC…LPTLLERARH (117 aa)) is the MTTase N-terminal domain. 6 residues coordinate [4Fe-4S] cluster: Cys23, Cys59, Cys93, Cys167, Cys171, and Cys174. Positions 153–401 (RESAYAGWVS…IELQERISLE (249 aa)) constitute a Radical SAM core domain. The 80-residue stretch at 404 to 483 (QAQVGRTLEL…PHHLIADGAL (80 aa)) folds into the TRAM domain.

The protein belongs to the methylthiotransferase family. MiaB subfamily. Monomer. It depends on [4Fe-4S] cluster as a cofactor.

The protein resides in the cytoplasm. It carries out the reaction N(6)-dimethylallyladenosine(37) in tRNA + (sulfur carrier)-SH + AH2 + 2 S-adenosyl-L-methionine = 2-methylsulfanyl-N(6)-dimethylallyladenosine(37) in tRNA + (sulfur carrier)-H + 5'-deoxyadenosine + L-methionine + A + S-adenosyl-L-homocysteine + 2 H(+). Its function is as follows. Catalyzes the methylthiolation of N6-(dimethylallyl)adenosine (i(6)A), leading to the formation of 2-methylthio-N6-(dimethylallyl)adenosine (ms(2)i(6)A) at position 37 in tRNAs that read codons beginning with uridine. The protein is tRNA-2-methylthio-N(6)-dimethylallyladenosine synthase of Mycobacterium sp. (strain JLS).